Here is a 273-residue protein sequence, read N- to C-terminus: Phosphatidylglycerol--prolipoprotein diacylglyceryl transferase (273 aa).

A run of 4 helical transmembrane segments spans residues 18–38 (IPVR…YVVG), 47–67 (LPED…IICA), 89–109 (IWNG…TAYI), and 116–136 (VSFL…QIIG). Arginine 137 is an a 1,2-diacyl-sn-glycero-3-phospho-(1'-sn-glycerol) binding site. 3 consecutive transmembrane segments (helical) span residues 178-198 (VHPT…ILLI), 207-227 (GEIF…IEGM), and 238-258 (LRSA…AIIY).

The protein belongs to the Lgt family.

It localises to the cell membrane. It catalyses the reaction L-cysteinyl-[prolipoprotein] + a 1,2-diacyl-sn-glycero-3-phospho-(1'-sn-glycerol) = an S-1,2-diacyl-sn-glyceryl-L-cysteinyl-[prolipoprotein] + sn-glycerol 1-phosphate + H(+). Its pathway is protein modification; lipoprotein biosynthesis (diacylglyceryl transfer). Catalyzes the transfer of the diacylglyceryl group from phosphatidylglycerol to the sulfhydryl group of the N-terminal cysteine of a prolipoprotein, the first step in the formation of mature lipoproteins. In Lysinibacillus sphaericus (strain C3-41), this protein is Phosphatidylglycerol--prolipoprotein diacylglyceryl transferase.